We begin with the raw amino-acid sequence, 302 residues long: MTAALLESQLHSLPLLARGKVRDNYAVGTDRILMVASDRLSAFDVIMGEGIPGKGELLTRVALYWFDRLGHIVPNHLTGADPVSVVAPDEVDQVRGRSMLVKRLKPLPVEAVVRGYLAGSGWKEYQETRSVCGVALPSGLTNAARLPAPIFTPATKAEMGDHDINISFERMSEIIGADLAERVRAISIQLYSSAAEIALSKGIIIADTKFEFGLDEDGTLTLMDEVLTPDSSRYWPIEHYQSAYAQGRNPPSFDKQFVRDWLESVRIDGQPWNKQAPAPALPDDVIVHTAATYREALERLTA.

The protein belongs to the SAICAR synthetase family.

It catalyses the reaction 5-amino-1-(5-phospho-D-ribosyl)imidazole-4-carboxylate + L-aspartate + ATP = (2S)-2-[5-amino-1-(5-phospho-beta-D-ribosyl)imidazole-4-carboxamido]succinate + ADP + phosphate + 2 H(+). Its pathway is purine metabolism; IMP biosynthesis via de novo pathway; 5-amino-1-(5-phospho-D-ribosyl)imidazole-4-carboxamide from 5-amino-1-(5-phospho-D-ribosyl)imidazole-4-carboxylate: step 1/2. This chain is Phosphoribosylaminoimidazole-succinocarboxamide synthase, found in Leptothrix cholodnii (strain ATCC 51168 / LMG 8142 / SP-6) (Leptothrix discophora (strain SP-6)).